The chain runs to 310 residues: MEFHHVTVLLKETVDGVVRDPSGTYVDCTLGGAGHSGYVLSRLSEKGKLVGFDQDPLAIKNAQDKFAGDPRVFLVNRNFEGLEESLQSLELLPVQGVLFDLGVSSPQLDEAERGFSYMQDAELDMRMNPQNPLSAKTLVNEGKAEMLAEILWKYGEEKWSKRIVEFIVEARKQKSITTTGELVDIIKRAIPAGARREGPHPAKRTFQALRIAVNDELGVLERALDQVIRCLAPGGRVGVITFHSLEDRIVKETFNSWLGRCTCPPVFPVCQCGARAMARLVHRKPILPSPQEIEANPRARSAKLRIAEKL.

S-adenosyl-L-methionine-binding positions include 33–35 (AGH), Asp53, Phe79, Asp100, and Gln107.

Belongs to the methyltransferase superfamily. RsmH family.

It localises to the cytoplasm. The catalysed reaction is cytidine(1402) in 16S rRNA + S-adenosyl-L-methionine = N(4)-methylcytidine(1402) in 16S rRNA + S-adenosyl-L-homocysteine + H(+). In terms of biological role, specifically methylates the N4 position of cytidine in position 1402 (C1402) of 16S rRNA. The polypeptide is Ribosomal RNA small subunit methyltransferase H (Desulfitobacterium hafniense (strain DSM 10664 / DCB-2)).